Consider the following 273-residue polypeptide: Glutamate racemase (273 aa).

Substrate is bound by residues 9–10 (DS) and 41–42 (YG). Cys-73 acts as the Proton donor/acceptor in catalysis. 74–75 (NT) lines the substrate pocket. The Proton donor/acceptor role is filled by Cys-183. 184-185 (TH) serves as a coordination point for substrate.

Belongs to the aspartate/glutamate racemases family.

The enzyme catalyses L-glutamate = D-glutamate. The protein operates within cell wall biogenesis; peptidoglycan biosynthesis. Provides the (R)-glutamate required for cell wall biosynthesis. This is Glutamate racemase from Shewanella oneidensis (strain ATCC 700550 / JCM 31522 / CIP 106686 / LMG 19005 / NCIMB 14063 / MR-1).